Reading from the N-terminus, the 132-residue chain is Large ribosomal subunit protein uL22c (132 aa).

Belongs to the universal ribosomal protein uL22 family. In terms of assembly, part of the 50S ribosomal subunit.

The protein resides in the plastid. The protein localises to the chloroplast. Its function is as follows. This protein binds specifically to 23S rRNA. Functionally, the globular domain of the protein is located near the polypeptide exit tunnel on the outside of the subunit, while an extended beta-hairpin is found that lines the wall of the exit tunnel in the center of the 70S ribosome. The sequence is that of Large ribosomal subunit protein uL22c (rpl22) from Populus trichocarpa (Western balsam poplar).